Here is an 860-residue protein sequence, read N- to C-terminus: Envelope glycoprotein gp160 (860 aa).

An N-terminal signal peptide occupies residues 1-22; that stretch reads MEPGRNQLFVVILLTSACLVYC. The Extracellular portion of the chain corresponds to 23 to 678; it reads SQYVTVFYGI…LTSWVKYIQY (656 aa). N-linked (GlcNAc...) asparagine; by host glycosylation is present at asparagine 37. A disulfide bridge links cysteine 44 with cysteine 57. Residues asparagine 70, asparagine 79, asparagine 112, asparagine 119, asparagine 144, asparagine 152, asparagine 194, asparagine 206, asparagine 238, asparagine 241, asparagine 272, asparagine 278, asparagine 289, asparagine 300, asparagine 310, asparagine 365, asparagine 371, asparagine 398, asparagine 410, asparagine 460, and asparagine 465 are each glycosylated (N-linked (GlcNAc...) asparagine; by host). 5 disulfide bridges follow: cysteine 101–cysteine 214, cysteine 108–cysteine 205, cysteine 113–cysteine 166, cysteine 227–cysteine 257, and cysteine 237–cysteine 249. Residues 113-165 are V1; sequence CSRVQGNTTTPNPRTSSSTTSRPPTSAASIINETSNCIENNTCAGLGYEEMMQ. The tract at residues 118–139 is disordered; it reads GNTTTPNPRTSSSTTSRPPTSA. Residues 119–139 show a composition bias toward low complexity; that stretch reads NTTTPNPRTSSSTTSRPPTSA. The tract at residues 166–205 is V2; that stretch reads CEFNMKGLEQDKKRRYKDTWYLEDVVCDNTTAGTCYMRHC. Positions 305–337 are V3; sequence CKRPGNKTVLPITLMSGLVFHSQPINTRPRQAW. Cysteine 305 and cysteine 338 are disulfide-bonded. 2 cysteine pairs are disulfide-bonded: cysteine 390–cysteine 444 and cysteine 397–cysteine 417. Residues 397–417 form a V4 region; it reads CNMTWFLNWVEDKNQTRRNYC. Positions 460-468 are V5; the sequence is NRTHTNITF. Positions 511–531 are fusion peptide; it reads GVFVLGFLGFLATAGSAMGAR. Residues 574–590 form an immunosuppression region; the sequence is LQARVTAIEKYLKHQAQ. 3 N-linked (GlcNAc...) asparagine; by host glycosylation sites follow: asparagine 610, asparagine 619, and asparagine 635. The stretch at 623–644 forms a coiled coil; it reads QEWEKQVRYLEANISQSLEEAQ. An MPER; binding to GalCer region spans residues 656 to 677; that stretch reads KLNSWDILGNWFDLTSWVKYIQ. A helical membrane pass occupies residues 679–699; the sequence is GVHIVVGIIALRIAIYVVQLL. Residues 700–860 are Cytoplasmic-facing; the sequence is SRFRKGYRPV…IRQGAELALL (161 aa). The short motif at 706 to 709 is the YXXV motif; contains endocytosis signal element; the sequence is YRPV. A lipid anchor (S-palmitoyl cysteine; by host) is attached at cysteine 772. The Di-leucine internalization motif motif lies at 859-860; it reads LL.

As to quaternary structure, the mature envelope protein (Env) consists of a homotrimer of non-covalently associated gp120-gp41 heterodimers. The resulting complex protrudes from the virus surface as a spike. There seems to be as few as 10 spikes on the average virion. Interacts with human CD4, CCR5 and CXCR4, to form a P4HB/PDI-CD4-CXCR4-gp120 complex. Gp120 also interacts with the C-type lectins CD209/DC-SIGN and CLEC4M/DC-SIGNR (collectively referred to as DC-SIGN(R)). Gp120 and gp41 interact with GalCer. The mature envelope protein (Env) consists of a homotrimer of non-covalently associated gp120-gp41 heterodimers. The resulting complex protrudes from the virus surface as a spike. There seems to be as few as 10 spikes on the average virion. In terms of processing, specific enzymatic cleavages in vivo yield mature proteins. Envelope glycoproteins are synthesized as an inactive precursor that is heavily N-glycosylated and processed likely by host cell furin in the Golgi to yield the mature SU and TM proteins. The cleavage site between SU and TM requires the minimal sequence [KR]-X-[KR]-R. Palmitoylation of the transmembrane protein and of Env polyprotein (prior to its proteolytic cleavage) is essential for their association with host cell membrane lipid rafts. Palmitoylation is therefore required for envelope trafficking to classical lipid rafts, but not for viral replication.

It is found in the virion membrane. It localises to the host cell membrane. Its subcellular location is the host endosome membrane. Functionally, the surface protein gp120 (SU) attaches the virus to the host lymphoid cell by binding to the primary receptor CD4. This interaction induces a structural rearrangement creating a high affinity binding site for a chemokine coreceptor like CXCR4 and/or CCR5. This peculiar 2 stage receptor-interaction strategy allows gp120 to maintain the highly conserved coreceptor-binding site in a cryptic conformation, protected from neutralizing antibodies. Since CD4 also displays a binding site for the disulfide-isomerase P4HB/PDI, a P4HB/PDI-CD4-CXCR4-gp120 complex may form. In that complex, P4HB/PDI could reach and reduce gp120 disulfide bonds, causing major conformational changes in gp120. TXN, another PDI family member could also be involved in disulfide rearrangements in Env during fusion. These changes are transmitted to the transmembrane protein gp41 and are thought to activate its fusogenic potential by unmasking its fusion peptide. The surface protein gp120 is a ligand for CD209/DC-SIGN and CLEC4M/DC-SIGNR, which are respectively found on dendritic cells (DCs), and on endothelial cells of liver sinusoids and lymph node sinuses. These interactions allow capture of viral particles at mucosal surfaces by these cells and subsequent transmission to permissive cells. DCs are professional antigen presenting cells, critical for host immunity by inducing specific immune responses against a broad variety of pathogens. They act as sentinels in various tissues where they take up antigen, process it, and present it to T-cells following migration to lymphoid organs. HIV subverts the migration properties of dendritic cells to gain access to CD4+ T-cells in lymph nodes. Virus transmission to permissive T-cells occurs either in trans (without DCs infection, through viral capture and transmission), or in cis (following DCs productive infection, through the usual CD4-gp120 interaction), thereby inducing a robust infection. In trans infection, bound virions remain infectious over days and it is proposed that they are not degraded, but protected in non-lysosomal acidic organelles within the DCs close to the cell membrane thus contributing to the viral infectious potential during DCs' migration from the periphery to the lymphoid tissues. On arrival at lymphoid tissues, intact virions recycle back to DCs' cell surface allowing virus transmission to CD4+ T-cells. Virion capture also seems to lead to MHC-II-restricted viral antigen presentation, and probably to the activation of HIV-specific CD4+ cells. Its function is as follows. The transmembrane protein gp41 (TM) acts as a class I viral fusion protein. Under the current model, the protein has at least 3 conformational states: pre-fusion native state, pre-hairpin intermediate state, and post-fusion hairpin state. During fusion of viral and target intracellular membranes, the coiled coil regions (heptad repeats) assume a trimer-of-hairpins structure, positioning the fusion peptide in close proximity to the C-terminal region of the ectodomain. The formation of this structure appears to drive apposition and subsequent fusion of viral and target cell membranes. Complete fusion occurs in host cell endosomes and is dynamin-dependent, however some lipid transfer might occur at the plasma membrane. The virus undergoes clathrin-dependent internalization long before endosomal fusion, thus minimizing the surface exposure of conserved viral epitopes during fusion and reducing the efficacy of inhibitors targeting these epitopes. Membranes fusion leads to delivery of the nucleocapsid into the cytoplasm. In terms of biological role, the envelope glycoprotein gp160 precursor down-modulates cell surface CD4 antigen by interacting with it in the endoplasmic reticulum and blocking its transport to the cell surface. Functionally, the gp120-gp41 heterodimer seems to contribute to T-cell depletion during HIV-1 infection. The envelope glycoproteins expressed on the surface of infected cells induce apoptosis through an interaction with uninfected cells expressing the receptor (CD4) and the coreceptors CXCR4 or CCR5. This type of bystander killing may be obtained by at least three distinct mechanisms. First, the interaction between the 2 cells can induce cellular fusion followed by nuclear fusion within the syncytium. Syncytia are condemned to die from apoptosis. Second, the 2 interacting cells may not fuse entirely and simply exchange plasma membrane lipids, after a sort of hemifusion process, followed by rapid death. Third, it is possible that virus-infected cells, on the point of undergoing apoptosis, fuse with CD4-expressing cells, in which case apoptosis is rapidly transmitted from one cell to the other and thus occurs in a sort of contagious fashion. The gp120-gp41 heterodimer allows rapid transcytosis of the virus through CD4 negative cells such as simple epithelial monolayers of the intestinal, rectal and endocervical epithelial barriers. Both gp120 and gp41 specifically recognize glycosphingolipids galactosyl-ceramide (GalCer) or 3' sulfo-galactosyl-ceramide (GalS) present in the lipid rafts structures of epithelial cells. Binding to these alternative receptors allows the rapid transcytosis of the virus through the epithelial cells. This transcytotic vesicle-mediated transport of virions from the apical side to the basolateral side of the epithelial cells does not involve infection of the cells themselves. This is Envelope glycoprotein gp160 (env) from Homo sapiens (Human).